Here is a 258-residue protein sequence, read N- to C-terminus: Imidazole glycerol phosphate synthase subunit HisF (258 aa).

Active-site residues include D12 and D131.

The protein belongs to the HisA/HisF family. As to quaternary structure, heterodimer of HisH and HisF.

The protein resides in the cytoplasm. The enzyme catalyses 5-[(5-phospho-1-deoxy-D-ribulos-1-ylimino)methylamino]-1-(5-phospho-beta-D-ribosyl)imidazole-4-carboxamide + L-glutamine = D-erythro-1-(imidazol-4-yl)glycerol 3-phosphate + 5-amino-1-(5-phospho-beta-D-ribosyl)imidazole-4-carboxamide + L-glutamate + H(+). The protein operates within amino-acid biosynthesis; L-histidine biosynthesis; L-histidine from 5-phospho-alpha-D-ribose 1-diphosphate: step 5/9. In terms of biological role, IGPS catalyzes the conversion of PRFAR and glutamine to IGP, AICAR and glutamate. The HisF subunit catalyzes the cyclization activity that produces IGP and AICAR from PRFAR using the ammonia provided by the HisH subunit. The protein is Imidazole glycerol phosphate synthase subunit HisF of Pseudarthrobacter chlorophenolicus (strain ATCC 700700 / DSM 12829 / CIP 107037 / JCM 12360 / KCTC 9906 / NCIMB 13794 / A6) (Arthrobacter chlorophenolicus).